Here is a 307-residue protein sequence, read N- to C-terminus: Dihydroorotate dehydrogenase A (fumarate) (307 aa).

Residues Ser-21 and Lys-46–Thr-47 contribute to the FMN site. Substrate-binding positions include Lys-46, Asn-70–Leu-74, and Asn-130. FMN is bound at residue Asn-130. The active-site Nucleophile is the Cys-133. The FMN site is built by Lys-168 and Ile-194. Asn-195 to Thr-196 serves as a coordination point for substrate. FMN-binding positions include Gly-220, Gly-246 to Gly-247, and Gly-268 to Ser-269.

This sequence belongs to the dihydroorotate dehydrogenase family. Type 1 subfamily. In terms of assembly, homodimer. Requires FMN as cofactor.

Its subcellular location is the cytoplasm. The catalysed reaction is (S)-dihydroorotate + fumarate = orotate + succinate. The protein operates within pyrimidine metabolism; UMP biosynthesis via de novo pathway. Functionally, catalyzes the conversion of dihydroorotate to orotate with fumarate as the electron acceptor. This chain is Dihydroorotate dehydrogenase A (fumarate) (pyrD), found in Lactobacillus helveticus (strain DPC 4571).